The sequence spans 801 residues: Na(+)/H(+) antiporter subunit A1 (801 aa).

The next 19 helical transmembrane spans lie at 1-21, 28-48, 79-99, 117-137, 166-186, 206-226, 265-285, 300-320, 337-357, 373-393, 427-447, 472-492, 522-542, 591-611, 623-643, 646-666, 671-691, 707-727, and 764-784; these read MSLL…IPIL, IHLG…MLTL, LGLL…LYSI, LFMG…LYLF, LIIT…LAIP, PFFI…SAQF, IFAA…ITLF, ILAF…GIGA, FTAA…LFMI, LGGL…TALS, LGYL…VYSI, ILML…GLFP, GLTP…LLIV, LVII…SVPF, IFEV…LFAK, LFNI…FIFF, LALT…LCFY, LTNA…GLIA, and MDTL…YTMI.

Belongs to the CPA3 antiporters (TC 2.A.63) subunit A family. May form a heterooligomeric complex that consists of seven subunits: mnhA1, mnhB1, mnhC1, mnhD1, mnhE1, mnhF1 and mnhG1.

It localises to the cell membrane. In terms of biological role, mnh complex is a Na(+)/H(+) antiporter involved in Na(+) excretion. This Staphylococcus aureus (strain bovine RF122 / ET3-1) protein is Na(+)/H(+) antiporter subunit A1 (mnhA1).